A 189-amino-acid chain; its full sequence is Phosphoheptose isomerase (189 aa).

An SIS domain is found at 34–189; it reads LVAALKGGKK…CDLVEKGLFK (156 aa). Substrate is bound at residue 49 to 51; that stretch reads NGG. Zn(2+)-binding residues include histidine 58 and glutamate 62. Residues glutamate 62, 91–92, 117–119, serine 122, and glutamine 169 contribute to the substrate site; these read ND and STS. 2 residues coordinate Zn(2+): glutamine 169 and histidine 177.

This sequence belongs to the SIS family. GmhA subfamily. In terms of assembly, homotetramer. Zn(2+) is required as a cofactor.

The protein localises to the cytoplasm. It carries out the reaction 2 D-sedoheptulose 7-phosphate = D-glycero-alpha-D-manno-heptose 7-phosphate + D-glycero-beta-D-manno-heptose 7-phosphate. Its pathway is carbohydrate biosynthesis; D-glycero-D-manno-heptose 7-phosphate biosynthesis; D-glycero-alpha-D-manno-heptose 7-phosphate and D-glycero-beta-D-manno-heptose 7-phosphate from sedoheptulose 7-phosphate: step 1/1. Catalyzes the isomerization of sedoheptulose 7-phosphate in D-glycero-D-manno-heptose 7-phosphate. The protein is Phosphoheptose isomerase of Geobacter metallireducens (strain ATCC 53774 / DSM 7210 / GS-15).